Here is a 478-residue protein sequence, read N- to C-terminus: Proline--tRNA ligase (478 aa).

This sequence belongs to the class-II aminoacyl-tRNA synthetase family. ProS type 3 subfamily. As to quaternary structure, homodimer.

The protein resides in the cytoplasm. It carries out the reaction tRNA(Pro) + L-proline + ATP = L-prolyl-tRNA(Pro) + AMP + diphosphate. Functionally, catalyzes the attachment of proline to tRNA(Pro) in a two-step reaction: proline is first activated by ATP to form Pro-AMP and then transferred to the acceptor end of tRNA(Pro). In Methanoregula boonei (strain DSM 21154 / JCM 14090 / 6A8), this protein is Proline--tRNA ligase.